We begin with the raw amino-acid sequence, 215 residues long: Ribosome maturation factor RimP (215 aa).

The interval 180-215 is disordered; sequence KDNRARKEAKKRRGEPDDDVPEGAEADATEEHEQES. Positions 195-207 are enriched in acidic residues; it reads PDDDVPEGAEADA.

Belongs to the RimP family.

Its subcellular location is the cytoplasm. Required for maturation of 30S ribosomal subunits. The polypeptide is Ribosome maturation factor RimP (Mesorhizobium japonicum (strain LMG 29417 / CECT 9101 / MAFF 303099) (Mesorhizobium loti (strain MAFF 303099))).